The following is a 550-amino-acid chain: Chaperonin GroEL (550 aa).

ATP contacts are provided by residues 30–33 (TLGP), Lys51, 87–91 (DGTTT), Gly415, 479–481 (NAA), and Asp495.

Belongs to the chaperonin (HSP60) family. As to quaternary structure, forms a cylinder of 14 subunits composed of two heptameric rings stacked back-to-back. Interacts with the co-chaperonin GroES.

It is found in the cytoplasm. The enzyme catalyses ATP + H2O + a folded polypeptide = ADP + phosphate + an unfolded polypeptide.. Its function is as follows. Together with its co-chaperonin GroES, plays an essential role in assisting protein folding. The GroEL-GroES system forms a nano-cage that allows encapsulation of the non-native substrate proteins and provides a physical environment optimized to promote and accelerate protein folding. The polypeptide is Chaperonin GroEL (Burkholderia mallei (strain NCTC 10247)).